Reading from the N-terminus, the 307-residue chain is Probable GTP 3',8-cyclase (307 aa).

Residues 5 to 227 (AYGRRISSLR…RRTKYYLGGA (223 aa)) form the Radical SAM core domain. Arg14 lines the GTP pocket. Residues Cys21 and Cys25 each contribute to the [4Fe-4S] cluster site. Residue Tyr27 participates in S-adenosyl-L-methionine binding. A [4Fe-4S] cluster-binding site is contributed by Cys28. Position 61 (Lys61) interacts with GTP. Gly65 contributes to the S-adenosyl-L-methionine binding site. Thr89 is a binding site for GTP. Ser113 contributes to the S-adenosyl-L-methionine binding site. Lys151 contributes to the GTP binding site. 2 residues coordinate [4Fe-4S] cluster: Cys241 and Cys244. 246–248 (RLR) provides a ligand contact to GTP. Cys258 provides a ligand contact to [4Fe-4S] cluster.

The protein belongs to the radical SAM superfamily. MoaA family. [4Fe-4S] cluster is required as a cofactor.

The catalysed reaction is GTP + AH2 + S-adenosyl-L-methionine = (8S)-3',8-cyclo-7,8-dihydroguanosine 5'-triphosphate + 5'-deoxyadenosine + L-methionine + A + H(+). The protein operates within cofactor biosynthesis; molybdopterin biosynthesis. Functionally, catalyzes the cyclization of GTP to (8S)-3',8-cyclo-7,8-dihydroguanosine 5'-triphosphate. The sequence is that of Probable GTP 3',8-cyclase from Methanocella arvoryzae (strain DSM 22066 / NBRC 105507 / MRE50).